The primary structure comprises 195 residues: Large ribosomal subunit protein uL5 (195 aa).

Belongs to the universal ribosomal protein uL5 family. As to quaternary structure, part of the 50S ribosomal subunit; part of the 5S rRNA/L5/L18/L25 subcomplex. Contacts the 5S rRNA and the P site tRNA. Forms a bridge to the 30S subunit in the 70S ribosome.

This is one of the proteins that bind and probably mediate the attachment of the 5S RNA into the large ribosomal subunit, where it forms part of the central protuberance. In the 70S ribosome it contacts protein S13 of the 30S subunit (bridge B1b), connecting the 2 subunits; this bridge is implicated in subunit movement. Contacts the P site tRNA; the 5S rRNA and some of its associated proteins might help stabilize positioning of ribosome-bound tRNAs. In Chlorobium chlorochromatii (strain CaD3), this protein is Large ribosomal subunit protein uL5.